The sequence spans 30 residues: Kalata-B17 (30 aa).

A cross-link (cyclopeptide (Gly-Asn)) is located at residues 1-30 (GIPCAESCVYIPCTITALLGCKCKDQVCYN). 3 disulfide bridges follow: Cys4–Cys21, Cys8–Cys23, and Cys13–Cys28.

In terms of processing, this is a cyclic peptide.

Its function is as follows. Probably participates in a plant defense mechanism. In Oldenlandia affinis, this protein is Kalata-B17.